The following is a 61-amino-acid chain: Small ribosomal subunit protein uS14 (61 aa).

4 residues coordinate Zn(2+): Cys24, Cys27, Cys40, and Cys43.

Belongs to the universal ribosomal protein uS14 family. Zinc-binding uS14 subfamily. In terms of assembly, part of the 30S ribosomal subunit. Contacts proteins S3 and S10. It depends on Zn(2+) as a cofactor.

Binds 16S rRNA, required for the assembly of 30S particles and may also be responsible for determining the conformation of the 16S rRNA at the A site. This is Small ribosomal subunit protein uS14 from Mycobacterium sp. (strain JLS).